Consider the following 297-residue polypeptide: Carboxysome assembly protein CcmO (297 aa).

The disordered stretch occupies residues 1–29 (MPTSPTMTSVPIARSPRPSYQQINQHQPS). Over residues 18–29 (PSYQQINQHQPS) the composition is skewed to polar residues. 2 consecutive BMC domains span residues 32-116 (ALGL…AVFP) and 138-222 (SIGL…HTLP).

The protein belongs to the bacterial microcompartments protein family. Homooligomerizes, possibly as a trimer, interacts with CcmK in the carboxysome.

Its subcellular location is the carboxysome. In terms of biological role, required for formation of the carboxysome, a polyhedral inclusion where RuBisCO (ribulose bisphosphate carboxylase, rbcL-rbcS) is sequestered. Required for recruitment of major shell protein CcmK2 to the pre-carboxysome. Suggested to be a carboxysome shell protein. The sequence is that of Carboxysome assembly protein CcmO from Synechocystis sp. (strain ATCC 27184 / PCC 6803 / Kazusa).